The following is a 223-amino-acid chain: Ribosomal RNA small subunit methyltransferase Nep1 (223 aa).

S-adenosyl-L-methionine contacts are provided by residues Gly181, Gly186, and 199–204 (LYREPL).

Belongs to the class IV-like SAM-binding methyltransferase superfamily. RNA methyltransferase NEP1 family. As to quaternary structure, homodimer.

The catalysed reaction is a pseudouridine in rRNA + S-adenosyl-L-methionine = an N(1)-methylpseudouridine in rRNA + S-adenosyl-L-homocysteine + H(+). Methyltransferase involved in ribosomal biogenesis. Specifically catalyzes the N1-methylation of the pseudouridine corresponding to position 914 in M.jannaschii 16S rRNA. The sequence is that of Ribosomal RNA small subunit methyltransferase Nep1 from Pyrococcus furiosus (strain ATCC 43587 / DSM 3638 / JCM 8422 / Vc1).